Reading from the N-terminus, the 169-residue chain is Peptide deformylase (169 aa).

Fe cation contacts are provided by cysteine 91 and histidine 133. The active site involves glutamate 134. Position 137 (histidine 137) interacts with Fe cation.

This sequence belongs to the polypeptide deformylase family. It depends on Fe(2+) as a cofactor.

It carries out the reaction N-terminal N-formyl-L-methionyl-[peptide] + H2O = N-terminal L-methionyl-[peptide] + formate. Functionally, removes the formyl group from the N-terminal Met of newly synthesized proteins. Requires at least a dipeptide for an efficient rate of reaction. N-terminal L-methionine is a prerequisite for activity but the enzyme has broad specificity at other positions. The polypeptide is Peptide deformylase (Salmonella agona (strain SL483)).